The chain runs to 670 residues: Major fimbrium tip subunit FimD (670 aa).

Residues methionine 1–glycine 24 form the signal peptide. Cysteine 25 carries the N-palmitoyl cysteine lipid modification. Cysteine 25 carries S-diacylglycerol cysteine lipidation. The propeptide occupies cysteine 25–arginine 50.

The protein belongs to the FimD family. As to quaternary structure, fimbriae are composed of a major, structural subunit and the minor components FimC, FimD and FimE. Identified in a complex composed of FimC, FimD and FimE (in vitro). The complex interacts with host extracellular matrix proteins, including fibronectin and type I collagen. Interacts with host CXCR4.

It localises to the fimbrium. Its subcellular location is the cell outer membrane. Probably a component of the fimbrium tip. These long, filamentous pili are attached to the cell surface; they mediate biofilm formation, adhesion onto host cells and onto other bacteria that are part of the oral microbiome. They play an important role in invasion of periodontal tissues and are major virulence factors. FimC, FimD and FimE contribute to interaction with host CXCR4 and thereby down-regulate the TLR2-mediated host immune response. The chain is Major fimbrium tip subunit FimD from Porphyromonas gingivalis (strain ATCC 33277 / DSM 20709 / CIP 103683 / JCM 12257 / NCTC 11834 / 2561).